The chain runs to 628 residues: 1-deoxy-D-xylulose-5-phosphate synthase (628 aa).

Residues H72 and 113 to 115 (GHS) each bind thiamine diphosphate. D144 lines the Mg(2+) pocket. Thiamine diphosphate contacts are provided by residues 145-146 (GA), N173, Y284, and E366. N173 is a Mg(2+) binding site.

The protein belongs to the transketolase family. DXPS subfamily. Homodimer. Requires Mg(2+) as cofactor. The cofactor is thiamine diphosphate.

The enzyme catalyses D-glyceraldehyde 3-phosphate + pyruvate + H(+) = 1-deoxy-D-xylulose 5-phosphate + CO2. It functions in the pathway metabolic intermediate biosynthesis; 1-deoxy-D-xylulose 5-phosphate biosynthesis; 1-deoxy-D-xylulose 5-phosphate from D-glyceraldehyde 3-phosphate and pyruvate: step 1/1. Functionally, catalyzes the acyloin condensation reaction between C atoms 2 and 3 of pyruvate and glyceraldehyde 3-phosphate to yield 1-deoxy-D-xylulose-5-phosphate (DXP). This is 1-deoxy-D-xylulose-5-phosphate synthase from Shouchella clausii (strain KSM-K16) (Alkalihalobacillus clausii).